We begin with the raw amino-acid sequence, 516 residues long: Putative transposase y4bL/y4kJ/y4tB (516 aa).

Positions 15–96 (IRTILRLTHE…PDWALVVREL (82 aa)) constitute an HTH IS408-type domain. The Integrase catalytic domain maps to 138–319 (FRNRHAAGAV…SRRELFEEIE (182 aa)). Residues 493 to 516 (ERPQAEHAAPTPAHTNIRGRSYYQ) are disordered.

Belongs to the transposase IS21/IS408/IS1162 family.

This is Putative transposase y4bL/y4kJ/y4tB from Sinorhizobium fredii (strain NBRC 101917 / NGR234).